A 54-amino-acid polypeptide reads, in one-letter code: Apelin receptor early endogenous ligand (54 aa).

The signal sequence occupies residues 1–22 (MRFQQFLFAFFIFIMSLLLISG). N27 is a glycosylation site (N-linked (GlcNAc...) asparagine).

Belongs to the Elabela/Toddler family. In terms of assembly, interacts with APLNR. As to expression, expressed in the intima of blood vessels. Expressed in endothelial cells in blood vessels in the heart and lung. Expressed in cytotrophoblasts and syncytiotrophoblasts of first-trimester placental tissue and term placentas (at protein level). Not detected in smooth muscle cells or cardiomyocytes (at protein level). Expressed in kidney. Expressed in blood vessels. Expressed in embryonic (ESCs) and induced (iPSCs) pluripotent stem cells. Most highly expressed in undifferentiated embryonic stem cell and is rapidly down-regulated during differentiation.

The protein resides in the secreted. It is found in the extracellular space. Functionally, peptide hormone that functions as endogenous ligand for the G-protein-coupled apelin receptor (APLNR/APJ), that plays a role in the regulation of normal cardiovascular function and fluid homeostasis. Functions as a balanced agonist activating both G(i) protein pathway and beta-arrestin pathway of APLNR. Downstream G proteins activation, apelin can inhibit cAMP production and activate key intracellular effectors such as ERKs. On the other hand, APLNR activation induces beta-arrestin recruitment to the membrane leading to desensitization and internalization of the receptor. Required for mesendodermal differentiation, blood vessels formation and heart morphogenesis during early development and for adult cardiovascular homeostasis. Acts as a motogen by promoting mesendodermal cell migration during gastrulation by binding and activating APLNR. Acts as an early embryonic regulator of cellular movement with a role in migration and development of cardiac progenitor cells. May act as a chemoattractant for the activation of angioblast migration toward the embryonic midline, i.e. the position of the future vessel formation, during vasculogenesis. Positively regulates sinus venosus (SV)-derived endothelial cells migration into the developing heart to promote coronary blood vessel sprouting. Plays a role in placental vascular development; promotes placental trophoblast invasion and spiral artery remodeling in the uterus. Involved in the regulation of maternal cardiovascular homeostasis to prevent gestational hypertension and for potent cardioprotective functions during heart failure. Mediates myocardial contractility in an ERK1/2-dependent manner. The polypeptide is Apelin receptor early endogenous ligand (Homo sapiens (Human)).